The following is a 741-amino-acid chain: Ethylene receptor 2 (741 aa).

3 helical membrane-spanning segments follow: residues 23-43, 53-73, and 92-112; these read ISDF…IYFV, WVLV…LINL, and IMTA…IPDL. Residues Cys65 and His69 each contribute to the Cu cation site. The 150-residue stretch at 158 to 307 folds into the GAF domain; that stretch reads DRHTILKTTL…VVADQVAVAL (150 aa). Residues 350–589 enclose the Histidine kinase domain; it reads VMNHEMRTPM…TFVVKLGIPE (240 aa). His353 is subject to Phosphohistidine; by autocatalysis. One can recognise a Response regulatory domain in the interval 615–732; sequence KVLLLDDNGV…KMRNVLSNLL (118 aa). 4-aspartylphosphate is present on Asp663.

It belongs to the ethylene receptor family. In terms of assembly, homodimer; disulfide-linked. Cu cation serves as cofactor. In terms of processing, activation probably requires a transfer of a phosphate group between a His in the transmitter domain and an Asp of the receiver domain.

The protein resides in the endoplasmic reticulum membrane. The enzyme catalyses ATP + protein L-histidine = ADP + protein N-phospho-L-histidine.. May act early in the ethylene signal transduction pathway, possibly as an ethylene receptor, or as a regulator of the pathway. The polypeptide is Ethylene receptor 2 (ETR2) (Pelargonium hortorum (Common geranium)).